Reading from the N-terminus, the 1175-residue chain is MAKPYEFNWQKEVPSFLQEGAVFDRYEEESFVFEPNCLFKVDEFGFFLTWRSEGKEGQVLECSLINSIRSGAIPKDPKILAALEAVGKSENDLEGRIVCVCSGTDLVNISFTYMVAENPEVTKQWVEGLRSIIHNFRANNVSPMTCLKKHWMKLAFMTNTNGKIPVRSITRTFASGKTEKVIFQALKELGLPSGKNDEIEPTAFSYEKFYELTQKICPRTDIEDLFKKINGDKTDYLTVDQLVSFLNEHQRDPRLNEILFPFYDAKRAMQIIEMYEPDEDLKKKGLISSDGFCRYLMSDENAPVFLDRLELYQEMDHPLAHYFISSSHNTYLTGRQFGGKSSVEMYRQVLLAGCRCVELDCWDGKGEDQEPIITHGKAMCTDILFKDVIQAIKETAFVTSEYPVILSFENHCSKYQQYKMSKYCEDLFGDLLLKQALESHPLEPGRALPSPNDLKRKILIKNKRLKPEVEKKQLEALRSMMEAGESASPANILEDDNEEEIESADQEEEAHPEFKFGNELSADDLGHKEAVANSVKKGLVTVEDEQAWMASYKYVGATTNIHPYLSTMINYAQPVKFQGFHVAEERNIHYNMSSFNESVGLGYLKTHAIEFVNYNKRQMSRIYPKGGRVDSSNYMPQIFWNAGCQMVSLNYQTPDLAMQLNQGKFEYNGSCGYLLKPDFMRRPDRTFDPFSETPVDGVIAATCSVQVISGQFLSDKKIGTYVEVDMYGLPTDTIRKEFRTRMVMNNGLNPVYNEESFVFRKVILPDLAVLRIAVYDDNNKLIGQRILPLDGLQAGYRHISLRNEGNKPLSLPTIFCNIVLKTYVPDGFGDIVDALSDPKKFLSITEKRADQMRAMGIETSDIADVPSDTSKNDKKGKANTAKANVTPQSSSELRPTTTAALASGVEAKKGIELIPQVRIEDLKQMKAYLKHLKKQQKELNSLKKKHAKEHSTMQKLHCTQVDKIVAQYDKEKSTHEKILEKAMKKKGGSNCLEMKKETEIKIQTLTSDHKSKVKEIVAQHTKEWSEMINTHSAEEQEIRDLHLSQQCELLKKLLINAHEQQTQQLKLSHDRESKEMRAHQAKISMENSKAISQDKSIKNKAERERRVRELNSSNTKKFLEERKRLAMKQSKEMDQLKKVQLEHLEFLEKQNEQAKEMQQMVKLEAEMDRRPATVV.

A2 is subject to N-acetylalanine. The PI-PLC X-box domain maps to 313-463; that stretch reads QEMDHPLAHY…LKRKILIKNK (151 aa). Active-site residues include H328 and H375. The interval 482–511 is disordered; that stretch reads EAGESASPANILEDDNEEEIESADQEEEAH. Acidic residues predominate over residues 493–508; the sequence is LEDDNEEEIESADQEE. A PI-PLC Y-box domain is found at 565 to 681; it reads LSTMINYAQP…GYLLKPDFMR (117 aa). A C2 domain is found at 684-809; that stretch reads DRTFDPFSET…SLRNEGNKPL (126 aa). Disordered stretches follow at residues 863-895 and 1082-1110; these read ADVP…ELRP and KISM…VREL. 2 stretches are compositionally biased toward polar residues: residues 881 to 895 and 1085 to 1094; these read AKAN…ELRP and MENSKAISQD. At T886 the chain carries Phosphothreonine. Positions 1095 to 1109 are enriched in basic and acidic residues; that stretch reads KSIKNKAERERRVRE.

Requires Ca(2+) as cofactor. As to expression, preferentially expressed in the retina.

The protein resides in the cell membrane. The catalysed reaction is a 1,2-diacyl-sn-glycero-3-phospho-(1D-myo-inositol-4,5-bisphosphate) + H2O = 1D-myo-inositol 1,4,5-trisphosphate + a 1,2-diacyl-sn-glycerol + H(+). The enzyme catalyses a 1,2-diacyl-sn-glycero-3-phospho-(1D-myo-inositol) + H2O = 1D-myo-inositol 1-phosphate + a 1,2-diacyl-sn-glycerol + H(+). Activated phosphatidylinositol-specific phospholipase C enzymes catalyze the production of the second messenger molecules diacylglycerol (DAG) and inositol 1,4,5-trisphosphate (IP3) involved in G-protein coupled receptor signaling pathways. PLCB4 is a direct effector of the endothelin receptor signaling pathway that plays an essential role in lower jaw and middle ear structures development. The sequence is that of 1-phosphatidylinositol 4,5-bisphosphate phosphodiesterase beta-4 from Homo sapiens (Human).